The chain runs to 264 residues: Thiazole synthase (264 aa).

Lysine 106 functions as the Schiff-base intermediate with DXP in the catalytic mechanism. 1-deoxy-D-xylulose 5-phosphate-binding positions include glycine 167, 193 to 194 (AG), and 215 to 216 (NS).

The protein belongs to the ThiG family. As to quaternary structure, homotetramer. Forms heterodimers with either ThiH or ThiS.

It localises to the cytoplasm. It carries out the reaction [ThiS sulfur-carrier protein]-C-terminal-Gly-aminoethanethioate + 2-iminoacetate + 1-deoxy-D-xylulose 5-phosphate = [ThiS sulfur-carrier protein]-C-terminal Gly-Gly + 2-[(2R,5Z)-2-carboxy-4-methylthiazol-5(2H)-ylidene]ethyl phosphate + 2 H2O + H(+). It participates in cofactor biosynthesis; thiamine diphosphate biosynthesis. Catalyzes the rearrangement of 1-deoxy-D-xylulose 5-phosphate (DXP) to produce the thiazole phosphate moiety of thiamine. Sulfur is provided by the thiocarboxylate moiety of the carrier protein ThiS. In vitro, sulfur can be provided by H(2)S. This chain is Thiazole synthase, found in Azotobacter vinelandii (strain DJ / ATCC BAA-1303).